We begin with the raw amino-acid sequence, 259 residues long: Pimeloyl-[acyl-carrier protein] methyl ester esterase (259 aa).

Substrate-binding positions include Trp18, 78–79 (SL), and 139–143 (FLALD). The active-site Nucleophile is Ser78. Residues Asp203 and His231 contribute to the active site. Substrate is bound at residue His231.

Belongs to the AB hydrolase superfamily. Carboxylesterase BioH family. In terms of assembly, monomer.

The protein localises to the cytoplasm. The catalysed reaction is 6-carboxyhexanoyl-[ACP] methyl ester + H2O = 6-carboxyhexanoyl-[ACP] + methanol + H(+). Its pathway is cofactor biosynthesis; biotin biosynthesis. Its function is as follows. The physiological role of BioH is to remove the methyl group introduced by BioC when the pimeloyl moiety is complete. It allows to synthesize pimeloyl-ACP via the fatty acid synthetic pathway through the hydrolysis of the ester bonds of pimeloyl-ACP esters. The polypeptide is Pimeloyl-[acyl-carrier protein] methyl ester esterase (Stenotrophomonas maltophilia (strain R551-3)).